A 154-amino-acid chain; its full sequence is Probable cyclic pyranopterin monophosphate synthase (154 aa).

Substrate-binding positions include 74–76 (LCH) and 110–111 (ME). The active site involves aspartate 125.

This sequence belongs to the MoaC family. In terms of assembly, homohexamer; trimer of dimers.

The catalysed reaction is (8S)-3',8-cyclo-7,8-dihydroguanosine 5'-triphosphate = cyclic pyranopterin phosphate + diphosphate. It participates in cofactor biosynthesis; molybdopterin biosynthesis. Its function is as follows. Catalyzes the conversion of (8S)-3',8-cyclo-7,8-dihydroguanosine 5'-triphosphate to cyclic pyranopterin monophosphate (cPMP). In Methanosphaerula palustris (strain ATCC BAA-1556 / DSM 19958 / E1-9c), this protein is Probable cyclic pyranopterin monophosphate synthase.